The primary structure comprises 127 residues: Aspartate 1-decarboxylase (127 aa).

Residue Ser-25 is the Schiff-base intermediate with substrate; via pyruvic acid of the active site. Pyruvic acid (Ser) is present on Ser-25. Thr-57 lines the substrate pocket. The Proton donor role is filled by Tyr-58. 73 to 75 (GAA) contacts substrate.

Belongs to the PanD family. As to quaternary structure, heterooctamer of four alpha and four beta subunits. Pyruvate serves as cofactor. Is synthesized initially as an inactive proenzyme, which is activated by self-cleavage at a specific serine bond to produce a beta-subunit with a hydroxyl group at its C-terminus and an alpha-subunit with a pyruvoyl group at its N-terminus.

It localises to the cytoplasm. The catalysed reaction is L-aspartate + H(+) = beta-alanine + CO2. It participates in cofactor biosynthesis; (R)-pantothenate biosynthesis; beta-alanine from L-aspartate: step 1/1. Catalyzes the pyruvoyl-dependent decarboxylation of aspartate to produce beta-alanine. The protein is Aspartate 1-decarboxylase of Vesicomyosocius okutanii subsp. Calyptogena okutanii (strain HA).